The following is a 759-amino-acid chain: NADP-dependent malic enzyme (759 aa).

The malic enzyme stretch occupies residues 1-428; the sequence is MDEQLKQSAL…KLTEFVYKTN (428 aa). Catalysis depends on tyrosine 39, which acts as the Proton donor. The active-site Proton acceptor is lysine 94. A divalent metal cation contacts are provided by glutamate 136, aspartate 137, and aspartate 162. NADP(+)-binding positions include 195–198, asparagine 288, and asparagine 320; that span reads AGAA. Residues 429–759 form a phosphate acetyltransferase region; sequence LFMKPIFSQA…AVVEAQTTPL (331 aa).

In the N-terminal section; belongs to the malic enzymes family. It in the C-terminal section; belongs to the phosphate acetyltransferase and butyryltransferase family. Mg(2+) serves as cofactor. Requires Mn(2+) as cofactor.

It carries out the reaction (S)-malate + NADP(+) = pyruvate + CO2 + NADPH. The enzyme catalyses oxaloacetate + H(+) = pyruvate + CO2. This chain is NADP-dependent malic enzyme (maeB), found in Salmonella typhimurium (strain LT2 / SGSC1412 / ATCC 700720).